Here is a 496-residue protein sequence, read N- to C-terminus: Apulose kinase (496 aa).

Residues 13–15 (TTN), Thr267, Gly308, and 408–412 (GATQN) each bind ATP.

The protein belongs to the FGGY kinase family.

The catalysed reaction is apulose + ATP = apulose 4-phosphate + ADP + H(+). The protein operates within carbohydrate metabolism. Involved in catabolism of D-apiose. Catalyzes phosphorylation of apulose to form apulose 4-phosphate. The protein is Apulose kinase of Pectobacterium atrosepticum (strain SCRI 1043 / ATCC BAA-672) (Erwinia carotovora subsp. atroseptica).